The chain runs to 449 residues: F-box/LRR-repeat protein At3g60040 (449 aa).

Positions 12-64 constitute an F-box domain; the sequence is RDAISWLPDEVLGKILSLIPTKQAVSTSLLAKKWRTIFRLVDHLELDDSFSLQ. 6 LRR repeats span residues 161-188, 191-215, 216-237, 239-263, 287-312, and 340-365; these read LTLG…FIDT, FYDI…SVHH, HDFI…SVDY, CPDD…EYSH, ERKV…HLSP, and KNKR…IVKD.

The protein is F-box/LRR-repeat protein At3g60040 of Arabidopsis thaliana (Mouse-ear cress).